Reading from the N-terminus, the 210-residue chain is Probable septum site-determining protein MinC (210 aa).

This sequence belongs to the MinC family. Interacts with MinD and FtsZ.

Its function is as follows. Cell division inhibitor that blocks the formation of polar Z ring septums. Rapidly oscillates between the poles of the cell to destabilize FtsZ filaments that have formed before they mature into polar Z rings. Prevents FtsZ polymerization. The protein is Probable septum site-determining protein MinC of Clostridium novyi (strain NT).